A 470-amino-acid polypeptide reads, in one-letter code: Low molecular weight neuronal intermediate filament (470 aa).

The interval 1 to 91 is head; sequence MTSRELYTSS…KIVRTNEKEQ (91 aa). Residues 88–399 form the IF rod domain; sequence EKEQLQGLND…KLLEGEETRL (312 aa). The coil 1A stretch occupies residues 91–123; that stretch reads QLQGLNDRFVTYIEKVHHLEQQNKLLESEVTLL. Residues 121–136 are linker 1; the sequence is TLLRQKHSEPSRLSHI. The interval 137–232 is coil 1B; sequence YEQEIRELRS…KVHEEEIAEL (96 aa). Residues 233–251 are linker 12; that stretch reads QASVQEAQISVEMDVVSKP. The segment at 252–270 is coil 2A; sequence DLTAALKEIRMQYEVLSAR. The interval 271 to 279 is linker 2; it reads NQQSSEEWY. Positions 280-395 are coil 2B; the sequence is QAKIANVSLE…AAYRKLLEGE (116 aa). The tract at residues 396–470 is tail; it reads ETRLTSVGGG…EKISQKAAAN (75 aa). The segment covering 414 to 431 has biased composition (low complexity); that stretch reads FSSGSYSGGRSSTTSTIS. A disordered region spans residues 414 to 470; the sequence is FSSGSYSGGRSSTTSTISIRKEEKKESPEGGKGGSSGQPKTSKPGDQEKISQKAAAN. The segment covering 432–442 has biased composition (basic and acidic residues); it reads IRKEEKKESPE.

It belongs to the intermediate filament family. Nervous system; in axons in the PNS and in small perikarya in the dorsal root ganglion.

The polypeptide is Low molecular weight neuronal intermediate filament (Xenopus laevis (African clawed frog)).